The following is a 150-amino-acid chain: Photosystem I reaction center subunit XI (150 aa).

The Stromal segment spans residues 1–72 (MSDFIQSYNN…DKLGPLRNTD (72 aa)). A helical transmembrane segment spans residues 73 to 93 (VALLSGFLSAVGLIIILTVCL). Over 94–118 (SMYGNVSFDKDDAKDLLQTTEGWGQ) the chain is Lumenal. The helical transmembrane segment at 119 to 139 (FTAGFLVGAVGGSGFAYLLLA) threads the bilayer. The Stromal portion of the chain corresponds to 140-150 (NIPVLQNLGLS).

Belongs to the PsaL family.

It localises to the plastid. Its subcellular location is the chloroplast thylakoid membrane. The sequence is that of Photosystem I reaction center subunit XI from Gracilaria tenuistipitata var. liui (Red alga).